The chain runs to 743 residues: Amylovoran biosynthesis protein AmsF (743 aa).

A signal peptide spans 1–27 (MKRRELIRTAFSTIVATAALSSVSARA).

The protein to R.meliloti ExoP.

Its subcellular location is the periplasm. The protein operates within glycan metabolism; exopolysaccharide biosynthesis. Its function is as follows. Involved in the biosynthesis of amylovoran which functions as a virulence factor. May be involved in the polymerization or late modification of the repeating units. The chain is Amylovoran biosynthesis protein AmsF (amsF) from Erwinia amylovora (Fire blight bacteria).